The primary structure comprises 631 residues: Sphingomyelin phosphodiesterase (631 aa).

Residues methionine 1–glycine 23 are disordered. A signal peptide spans methionine 1–alanine 46. A Saposin B-type domain is found at glycine 87–aspartate 171. N-linked (GlcNAc...) asparagine glycosylation is present at asparagine 88. 3 disulfides stabilise this stretch: cysteine 91–cysteine 167, cysteine 94–cysteine 159, and cysteine 122–cysteine 133. Asparagine 177 carries an N-linked (GlcNAc...) asparagine glycan. Zn(2+)-binding residues include aspartate 208 and histidine 210. 2 disulfide bridges follow: cysteine 223-cysteine 228 and cysteine 229-cysteine 252. Positions 280 and 320 each coordinate Zn(2+). 2 N-linked (GlcNAc...) asparagine glycosylation sites follow: asparagine 337 and asparagine 397. Cysteines 387 and 433 form a disulfide. Residues histidine 427, histidine 459, and histidine 461 each coordinate Zn(2+). N-linked (GlcNAc...) asparagine glycosylation is present at asparagine 505. At serine 510 the chain carries Phosphoserine; by PKC/PRKCD. Asparagine 522 is a glycosylation site (N-linked (GlcNAc...) asparagine). Intrachain disulfides connect cysteine 586–cysteine 590 and cysteine 596–cysteine 609.

It belongs to the acid sphingomyelinase family. Monomer. Interacts with SORT1; the interaction is required for SMPD1 targeting to lysosomes. Requires Zn(2+) as cofactor. Post-translationally, proteolytically processed. Mature lysosomal form arises from C-terminal proteolytic processing of pro-sphingomyelin phosphodiesterase. This form is generated following cleavage by CASP7 in the extracellular milieu. It shows increased activity. In terms of processing, both lysosomal and secreted forms are glycosylated but they show a differential pattern of glycosylation. Post-translationally, phosphorylated at Ser-510 by PRKCD upon stress stimuli. Phosphorylation is required for secretion.

The protein localises to the lysosome. It is found in the lipid droplet. Its subcellular location is the secreted. The protein resides in the extracellular space. The catalysed reaction is a sphingomyelin + H2O = phosphocholine + an N-acylsphing-4-enine + H(+). The enzyme catalyses N-(octadecanoyl)-sphing-4-enine-1-phosphocholine + H2O = N-octadecanoylsphing-4-enine + phosphocholine + H(+). It carries out the reaction 1,2-dihexadecanoyl-sn-glycero-3-phosphocholine + H2O = 1,2-dihexadecanoyl-sn-glycerol + phosphocholine + H(+). It catalyses the reaction a 1,2-diacyl-sn-glycero-3-phosphocholine + H2O = phosphocholine + a 1,2-diacyl-sn-glycerol + H(+). With respect to regulation, hydrolysis of liposomal sphingomyelin is stimulated by incorporation of diacylglycerol (DAG), ceramide and free fatty acids into the liposomal membranes. Phosphatidylcholine hydrolysis is inhibited by incorporation of cholesterol, ceramide, DAG, monoacylglycerol and fatty acids. Antidepressants, namely amitriptyline, imipramine, desipramine, fluoxetine, sertraline, escitalopram, and maprotiline inhibit sphingomyelin phosphodiesterase activity. (Microbial infection) The secretory form is activated by P.aeruginosa, this activation results in the release of ceramide in the outer leaflet of the plasma membrane. Its activity is regulated as follows. (Microbial infection) The secretory form is activated by human coronavirus SARS-CoV-2, this activation results in the release of ceramide in the outer leaflet of the plasma membrane. In terms of biological role, converts sphingomyelin to ceramide. Exists as two enzymatic forms that arise from alternative trafficking of a single protein precursor, one that is targeted to the endolysosomal compartment, whereas the other is released extracellularly. However, in response to various forms of stress, lysosomal exocytosis may represent a major source of the secretory form. Its function is as follows. In the lysosomes, converts sphingomyelin to ceramide. Plays an important role in the export of cholesterol from the intraendolysosomal membranes. Also has phospholipase C activities toward 1,2-diacylglycerolphosphocholine and 1,2-diacylglycerolphosphoglycerol. Modulates stress-induced apoptosis through the production of ceramide. When secreted, modulates cell signaling with its ability to reorganize the plasma membrane by converting sphingomyelin to ceramide. Secreted form is increased in response to stress and inflammatory mediators such as IL1B, IFNG or TNF as well as upon infection with bacteria and viruses. Produces the release of ceramide in the outer leaflet of the plasma membrane playing a central role in host defense. Ceramide reorganizes these rafts into larger signaling platforms that are required to internalize P.aeruginosa, induce apoptosis and regulate the cytokine response in infected cells. In wounded cells, the lysosomal form is released extracellularly in the presence of Ca(2+) and promotes endocytosis and plasma membrane repair. Functionally, this form is generated following cleavage by CASP7 in the extracellular milieu in response to bacterial infection. It shows increased ability to convert sphingomyelin to ceramide and promotes plasma membrane repair. Plasma membrane repair by ceramide counteracts the action of gasdermin-D (GSDMD) perforin (PRF1) pores that are formed in response to bacterial infection. In terms of biological role, (Microbial infection) Secretion is activated by bacteria such as P.aeruginosa, N.gonorrhoeae and others, this activation results in the release of ceramide in the outer leaflet of the plasma membrane which facilitates the infection. Its function is as follows. (Microbial infection) Secretion is activated by human coronaviruses SARS-CoV and SARS-CoV-2 as well as Zaire ebolavirus, this activation results in the release of ceramide in the outer leaflet of the plasma membrane which facilitates the infection. Lacks residues that bind the cofactor Zn(2+) and has no enzyme activity. This chain is Sphingomyelin phosphodiesterase, found in Homo sapiens (Human).